We begin with the raw amino-acid sequence, 3230 residues long: Helicase SRCAP (3230 aa).

The segment at Met-1–Leu-71 is disordered. A compositionally biased stretch (low complexity) spans Gly-26 to Ser-41. In terms of domain architecture, HSA spans Leu-124–Ser-196. Disordered stretches follow at residues Gln-253–Asp-547 and Glu-559–Lys-581. Residues Ser-257 to Ser-273 are compositionally biased toward low complexity. Residues Asp-283–Asp-313 are compositionally biased toward acidic residues. Positions Glu-315 to Glu-329 are enriched in basic and acidic residues. Residues Arg-337–Ser-356 are compositionally biased toward low complexity. Positions Asp-397–Gly-425 are enriched in acidic residues. Positions Glu-426–Glu-441 are enriched in basic and acidic residues. Acidic residues-rich tracts occupy residues Ser-462 to Gln-490, Arg-503 to Thr-517, and Glu-524 to Asp-533. The Helicase ATP-binding domain occupies Val-630 to His-795. ATP is bound at residue Asp-643–Thr-650. Disordered regions lie at residues Ala-1017–Leu-1045, Pro-1058–Ser-1125, and Thr-1138–Pro-1166. 2 stretches are compositionally biased toward pro residues: residues Pro-1018 to Pro-1030 and Pro-1058 to Gln-1076. Over residues Leu-1093–Lys-1107 the composition is skewed to low complexity. Over residues Pro-1108–Gly-1123 the composition is skewed to pro residues. Residues Thr-1138–Pro-1160 show a composition bias toward low complexity. Ser-1172 is subject to Phosphoserine. Disordered regions lie at residues Gly-1320–Pro-1366, Ser-1406–Ser-1425, Val-1629–Val-1760, and Ser-1839–Arg-1893. Residues Pro-1323 to Ser-1336 show a composition bias toward pro residues. A compositionally biased stretch (low complexity) spans Gly-1337–Thr-1360. A compositionally biased stretch (low complexity) spans Pro-1675 to Leu-1691. Over residues Gly-1692–Ser-1733 the composition is skewed to polar residues. A compositionally biased stretch (pro residues) spans Pro-1750–Val-1760. The Helicase C-terminal domain occupies Lys-2044–Thr-2197. 6 disordered regions span residues Leu-2214 to Val-2233, Phe-2271 to Ala-2298, Val-2327 to Ala-2453, Leu-2564 to Lys-2583, Lys-2598 to Ser-3081, and Asp-3095 to Thr-3230. Residues Glu-2215 to Ala-2225 show a composition bias toward low complexity. Basic and acidic residues-rich tracts occupy residues Glu-2284–Ala-2298, Val-2327–Gln-2358, and Lys-2386–Arg-2403. A compositionally biased stretch (pro residues) spans Arg-2438–Ala-2448. Low complexity-rich tracts occupy residues Leu-2564 to Leu-2579 and Leu-2600 to Leu-2611. Positions Glu-2669–Glu-2679 are enriched in basic and acidic residues. Over residues Val-2694–Glu-2712 the composition is skewed to low complexity. The segment covering Ser-2782–Arg-2794 has biased composition (polar residues). Low complexity predominate over residues Gly-2807 to Leu-2817. Positions Val-2856–Arg-2868 are enriched in basic residues. The segment at residues Lys-2857–Ser-2869 is a DNA-binding region (a.T hook 1). The segment covering Ile-2913–Arg-2926 has biased composition (pro residues). A DNA-binding region (a.T hook 2) is located at residues Lys-2936–Leu-2948. Over residues Thr-2953–Arg-2965 the composition is skewed to polar residues. The span at Gln-2967–Leu-2982 shows a compositional bias: pro residues. A compositionally biased stretch (low complexity) spans Val-2983 to Pro-3002. The segment at residues Lys-3004 to Ser-3016 is a DNA-binding region (a.T hook 3). Pro residues predominate over residues Pro-3011–Ser-3020. Low complexity predominate over residues Pro-3044–Ser-3053. Acidic residues predominate over residues Ser-3168–Asp-3184.

The protein belongs to the SNF2/RAD54 helicase family. SWR1 subfamily. In terms of assembly, interacts with CREBBP and EP300. May be part of a complex containing SRCAP, CREBBP, CARM1 and GRIP1. Component of the chromatin-remodeling SRCAP complex composed of at least SRCAP, DMAP1, RUVBL1, RUVBL2, ACTL6A, YEATS4, VPS72, ACTR6 and ZNHIT1. Component of a NuA4-related complex which contains EP400, TRRAP/PAF400, SRCAP, BRD8/SMAP, EPC1, DMAP1/DNMAP1, RUVBL1/TIP49, RUVBL2, actin, ACTL6A/BAF53A, VPS72 and YEATS4/GAS41. (Microbial infection) Interacts with hepatitis C virus (HCV) NS5A. As to quaternary structure, (Microbial infection) Interacts with human adenovirus 2 DBP.

The protein resides in the nucleus. Its function is as follows. Catalytic component of the SRCAP complex which mediates the ATP-dependent exchange of histone H2AZ/H2B dimers for nucleosomal H2A/H2B, leading to transcriptional regulation of selected genes by chromatin remodeling. Acts as a coactivator for CREB-mediated transcription, steroid receptor-mediated transcription, and Notch-mediated transcription. The sequence is that of Helicase SRCAP (SRCAP) from Homo sapiens (Human).